The sequence spans 356 residues: MKFLDEAKVYVRSGDGGNGCVAFRREKFIEFGGPNGGNGGRGGDVVIEAVDGLNTLIDYRYQQHFKAQRGGNGSGKDCHGAGGKSVVLKVPVGTQIFDEDRETLIHDFTTVGERFVLAQGGNGGFGNAHFKSPTNRAPRHANPGQPGEERWIWLRMKLIADAGLVGLPNAGKSTFLSKVSAAKPKIADYPFTTLHPQLGVVNADGREFVLADIPGLIEGAHEGAGLGDRFLGHVERCRVLLHLVDATCEHAGKAYKTVRHELEAYGGDLTDKVEIVALNKIDAVDPDELKKQKDRLKRAAKKTPLLISGATGEGVKEALRKLADVISEQPVSIKAKSTSDSAATEEPWAAPLPPQG.

The Obg domain occupies 1-159 (MKFLDEAKVY…RWIWLRMKLI (159 aa)). In terms of domain architecture, OBG-type G spans 160–327 (ADAGLVGLPN…ALRKLADVIS (168 aa)). Residues 166–173 (GLPNAGKS), 191–195 (FTTLH), 212–215 (DIPG), 279–282 (NKID), and 308–310 (SGA) each bind GTP. Mg(2+)-binding residues include Ser-173 and Thr-193. The disordered stretch occupies residues 332–356 (SIKAKSTSDSAATEEPWAAPLPPQG).

The protein belongs to the TRAFAC class OBG-HflX-like GTPase superfamily. OBG GTPase family. In terms of assembly, monomer. It depends on Mg(2+) as a cofactor.

It is found in the cytoplasm. An essential GTPase which binds GTP, GDP and possibly (p)ppGpp with moderate affinity, with high nucleotide exchange rates and a fairly low GTP hydrolysis rate. Plays a role in control of the cell cycle, stress response, ribosome biogenesis and in those bacteria that undergo differentiation, in morphogenesis control. This is GTPase Obg from Bradyrhizobium sp. (strain BTAi1 / ATCC BAA-1182).